Consider the following 232-residue polypeptide: Ubiquinone biosynthesis O-methyltransferase (232 aa).

Arg36, Gly55, Asp76, and Leu120 together coordinate S-adenosyl-L-methionine.

It belongs to the methyltransferase superfamily. UbiG/COQ3 family.

It carries out the reaction a 3-demethylubiquinol + S-adenosyl-L-methionine = a ubiquinol + S-adenosyl-L-homocysteine + H(+). The catalysed reaction is a 3-(all-trans-polyprenyl)benzene-1,2-diol + S-adenosyl-L-methionine = a 2-methoxy-6-(all-trans-polyprenyl)phenol + S-adenosyl-L-homocysteine + H(+). The protein operates within cofactor biosynthesis; ubiquinone biosynthesis. Its function is as follows. O-methyltransferase that catalyzes the 2 O-methylation steps in the ubiquinone biosynthetic pathway. This Pseudomonas putida (strain ATCC 700007 / DSM 6899 / JCM 31910 / BCRC 17059 / LMG 24140 / F1) protein is Ubiquinone biosynthesis O-methyltransferase.